Consider the following 199-residue polypeptide: Translation initiation factor IF-3 (199 aa).

The protein belongs to the IF-3 family. As to quaternary structure, monomer.

The protein localises to the cytoplasm. In terms of biological role, IF-3 binds to the 30S ribosomal subunit and shifts the equilibrium between 70S ribosomes and their 50S and 30S subunits in favor of the free subunits, thus enhancing the availability of 30S subunits on which protein synthesis initiation begins. This is Translation initiation factor IF-3 from Mycoplasmopsis pulmonis (strain UAB CTIP) (Mycoplasma pulmonis).